Consider the following 270-residue polypeptide: uncharacterized protein (270 aa).

This is an uncharacterized protein from Archaeoglobus fulgidus (strain ATCC 49558 / DSM 4304 / JCM 9628 / NBRC 100126 / VC-16).